Here is an 824-residue protein sequence, read N- to C-terminus: MDEDEKDRAKRASRNKSEKKRRDQFNVLIKELSSMLPGNTRKMDKTTVLEKVIGFLQKHNEVSAQTEICDIQQDWKPSFLSNEEFTQLMLEALDGFIIAVTTDGSIIYVSDSITPLLGHLPSDVMDQNLLNFLPEQEHSEVYKILSSHMLVTDSPSPEYLKSDSDLEFYCHLLRGSLNPKEFPTYEYIKFVGNFRSYNNVPSPSCNGFDNTLSRPCRVPLGKEVCFIATVRLATPQFLKEMCIVDEPLEEFTSRHSLEWKFLFLDHRAPPIIGYLPFEVLGTSGYDYYHIDDLELLARCHQHLMQFGKGKSCCYRFLTKGQQWIWLQTHYYITYHQWNSKPEFIVCTHSVVSYADVRVERRQELALEDPPSEALHSSALKDKGSSLEPRQHFNTLDVGASGLNTSHSPSASSRSSHKSSHTAMSEPTSTPTKLMAEASTPALPRSATLPQELPVPGLSQAATMPAPLPSPSSCDLTQQLLPQTVLQSTPAPMAQFSAQFSMFQTIKDQLEQRTRILQANIRWQQEELHKIQEQLCLVQDSNVQMFLQQPAVSLSFSSTQRPEAQQQLQQRSAAVTQPQLGAGPQLPGQISSAQVTSQHLLRESSVISTQGPKPMRSSQLMQSSGRSGSSLVSPFSSATAALPPSLNLTTPASTSQDASQCQPSPDFSHDRQLRLLLSQPIQPMMPGSCDARQPSEVSRTGRQVKYAQSQTVFQNPDAHPANSSSAPMPVLLMGQAVLHPSFPASQPSPLQPAQARQQPPQHYLQVQAPTSLHSEQQDSLLLSTYSQQPGTLGYPQPPPAQPQPLRPPRRVSSLSESSGLQQPPR.

The span at Met1–Lys10 shows a compositional bias: basic and acidic residues. The segment at Met1–Arg21 is disordered. Positions Met1–Glu61 are sufficient for heterodimer formation with BMAL1, E-box binding and for the effect of NADPH. Residues Ala9–His59 form the bHLH domain. The PAS 1 domain occupies Asn82–Thr152. Heme b contacts are provided by His119 and His171. Residues Phe237 to Gly307 enclose the PAS 2 domain. Residues Ser311–Ala354 enclose the PAC domain. Disordered stretches follow at residues Glu367–Ala437, Ser556–Ser667, Gln681–Lys704, and Pro739–Arg824. Residues Ala378 to Gln390 show a composition bias toward basic and acidic residues. Residues Thr421–Thr431 are compositionally biased toward polar residues. A compositionally biased stretch (low complexity) spans Gln559–Gln576. Positions Gly587 to Gly610 are enriched in polar residues. Residues Met614–Ser636 show a composition bias toward low complexity. 2 stretches are compositionally biased toward polar residues: residues Leu645–Pro664 and Ser694–Lys704. The span at Pro739–Gln760 shows a compositional bias: low complexity. A compositionally biased stretch (polar residues) spans Gln766–Gly789. A compositionally biased stretch (pro residues) spans Pro794–Arg805. Residues Arg809–Arg824 are compositionally biased toward low complexity.

Component of the circadian clock oscillator which includes the CRY proteins, CLOCK or NPAS2, BMAL1 or BMAL2, CSNK1D and/or CSNK1E, TIMELESS and the PER proteins. Efficient DNA binding requires dimerization with another bHLH protein. Forms a heterodimer with BMAL1 and this heterodimerization is required for E-box-dependent transactivation. Interacts with NCOA3, KAT2B, CREBBP and EP300. The cofactor is heme.

It is found in the nucleus. Carbon monoxide (CO) and the redox state of the cell can modulate the transcriptional activity of the NPAS2-BMAL1 heterodimer. NADH and NADPH enhance the DNA-binding activity of the heterodimer whereas CO binds the heme group in NPAS2 and inhibits the DNA-binding activity of the heterodimer. Its function is as follows. Transcriptional activator which forms a core component of the circadian clock. The circadian clock, an internal time-keeping system, regulates various physiological processes through the generation of approximately 24 hour circadian rhythms in gene expression, which are translated into rhythms in metabolism and behavior. It is derived from the Latin roots 'circa' (about) and 'diem' (day) and acts as an important regulator of a wide array of physiological functions including metabolism, sleep, body temperature, blood pressure, endocrine, immune, cardiovascular, and renal function. Consists of two major components: the central clock, residing in the suprachiasmatic nucleus (SCN) of the brain, and the peripheral clocks that are present in nearly every tissue and organ system. Both the central and peripheral clocks can be reset by environmental cues, also known as Zeitgebers (German for 'timegivers'). The predominant Zeitgeber for the central clock is light, which is sensed by retina and signals directly to the SCN. The central clock entrains the peripheral clocks through neuronal and hormonal signals, body temperature and feeding-related cues, aligning all clocks with the external light/dark cycle. Circadian rhythms allow an organism to achieve temporal homeostasis with its environment at the molecular level by regulating gene expression to create a peak of protein expression once every 24 hours to control when a particular physiological process is most active with respect to the solar day. Transcription and translation of core clock components (CLOCK, NPAS2, BMAL1, BMAL2, PER1, PER2, PER3, CRY1 and CRY2) plays a critical role in rhythm generation, whereas delays imposed by post-translational modifications (PTMs) are important for determining the period (tau) of the rhythms (tau refers to the period of a rhythm and is the length, in time, of one complete cycle). A diurnal rhythm is synchronized with the day/night cycle, while the ultradian and infradian rhythms have a period shorter and longer than 24 hours, respectively. Disruptions in the circadian rhythms contribute to the pathology of cardiovascular diseases, cancer, metabolic syndromes and aging. A transcription/translation feedback loop (TTFL) forms the core of the molecular circadian clock mechanism. Transcription factors, CLOCK or NPAS2 and BMAL1 or BMAL2, form the positive limb of the feedback loop, act in the form of a heterodimer and activate the transcription of core clock genes and clock-controlled genes (involved in key metabolic processes), harboring E-box elements (5'-CACGTG-3') within their promoters. The core clock genes: PER1/2/3 and CRY1/2 which are transcriptional repressors form the negative limb of the feedback loop and interact with the CLOCK|NPAS2-BMAL1|BMAL2 heterodimer inhibiting its activity and thereby negatively regulating their own expression. This heterodimer also activates nuclear receptors NR1D1/2 and RORA/B/G, which form a second feedback loop and which activate and repress BMAL1 transcription, respectively. The NPAS2-BMAL1 heterodimer positively regulates the expression of MAOA, F7 and LDHA and modulates the circadian rhythm of daytime contrast sensitivity by regulating the rhythmic expression of adenylate cyclase type 1 (ADCY1) in the retina. NPAS2 plays an important role in sleep homeostasis and in maintaining circadian behaviors in normal light/dark and feeding conditions and in the effective synchronization of feeding behavior with scheduled food availability. Regulates the gene transcription of key metabolic pathways in the liver and is involved in DNA damage response by regulating several cell cycle and DNA repair genes. Controls the circadian rhythm of NR0B2 expression by binding rhythmically to its promoter. Mediates the diurnal variation in the expression of GABARA1 receptor in the brain and contributes to the regulation of anxiety-like behaviors and GABAergic neurotransmission in the ventral striatum. This Homo sapiens (Human) protein is Neuronal PAS domain-containing protein 2 (NPAS2).